Here is a 367-residue protein sequence, read N- to C-terminus: Probable butyrate kinase (367 aa).

It belongs to the acetokinase family.

It localises to the cytoplasm. The enzyme catalyses butanoate + ATP = butanoyl phosphate + ADP. The protein is Probable butyrate kinase of Bacillus cytotoxicus (strain DSM 22905 / CIP 110041 / 391-98 / NVH 391-98).